The primary structure comprises 115 residues: Large ribosomal subunit protein uL24 (115 aa).

Disordered regions lie at residues 45–77 and 96–115; these read VRQS…STGK and KASG…KAAS.

This sequence belongs to the universal ribosomal protein uL24 family. In terms of assembly, part of the 50S ribosomal subunit.

One of two assembly initiator proteins, it binds directly to the 5'-end of the 23S rRNA, where it nucleates assembly of the 50S subunit. In terms of biological role, one of the proteins that surrounds the polypeptide exit tunnel on the outside of the subunit. This chain is Large ribosomal subunit protein uL24, found in Rhodopirellula baltica (strain DSM 10527 / NCIMB 13988 / SH1).